A 348-amino-acid chain; its full sequence is 4-hydroxy-2-oxovalerate aldolase 3 (348 aa).

One can recognise a Pyruvate carboxyltransferase domain in the interval 8–260 (ITVHDMTLRD…ETGVDVWKIQ (253 aa)). Substrate is bound at residue 16–17 (RD). Asp-17 provides a ligand contact to Mn(2+). His-20 acts as the Proton acceptor in catalysis. Residues Ser-170 and His-199 each coordinate substrate. Residues His-199 and His-201 each coordinate Mn(2+). Residue Tyr-290 coordinates substrate.

Belongs to the 4-hydroxy-2-oxovalerate aldolase family.

The catalysed reaction is (S)-4-hydroxy-2-oxopentanoate = acetaldehyde + pyruvate. The sequence is that of 4-hydroxy-2-oxovalerate aldolase 3 from Burkholderia lata (strain ATCC 17760 / DSM 23089 / LMG 22485 / NCIMB 9086 / R18194 / 383).